The sequence spans 269 residues: 4-hydroxy-tetrahydrodipicolinate reductase (269 aa).

NAD(+)-binding positions include 10 to 15 (GSSGRM) and glutamate 36. Position 37 (arginine 37) interacts with NADP(+). NAD(+) contacts are provided by residues 99–101 (GTT) and 123–126 (APNM). The active-site Proton donor/acceptor is histidine 156. Histidine 157 contributes to the (S)-2,3,4,5-tetrahydrodipicolinate binding site. Lysine 160 (proton donor) is an active-site residue. (S)-2,3,4,5-tetrahydrodipicolinate is bound at residue 166-167 (GT).

The protein belongs to the DapB family.

It is found in the cytoplasm. The enzyme catalyses (S)-2,3,4,5-tetrahydrodipicolinate + NAD(+) + H2O = (2S,4S)-4-hydroxy-2,3,4,5-tetrahydrodipicolinate + NADH + H(+). It catalyses the reaction (S)-2,3,4,5-tetrahydrodipicolinate + NADP(+) + H2O = (2S,4S)-4-hydroxy-2,3,4,5-tetrahydrodipicolinate + NADPH + H(+). It participates in amino-acid biosynthesis; L-lysine biosynthesis via DAP pathway; (S)-tetrahydrodipicolinate from L-aspartate: step 4/4. Functionally, catalyzes the conversion of 4-hydroxy-tetrahydrodipicolinate (HTPA) to tetrahydrodipicolinate. The sequence is that of 4-hydroxy-tetrahydrodipicolinate reductase from Nitrosospira multiformis (strain ATCC 25196 / NCIMB 11849 / C 71).